The following is a 268-amino-acid chain: (+)-cis,trans-nepetalactol synthase NEPS2 (268 aa).

Residues 16 to 22 (GGASGIG), 41 to 43 (DIQ), 65 to 66 (DI), Asn92, 163 to 167 (YVMSK), and 196 to 200 (VLTPL) contribute to the NAD(+) site.

The protein belongs to the short-chain dehydrogenases/reductases (SDR) family.

It carries out the reaction (S)-8-oxocitronellyl enol = cis-trans-nepetalactol. In terms of biological role, functions as a non-oxidoreductive cyclase to promote the formation of cis-trans-nepetalactol. Cis-trans-nepetalactol is then oxidized by NEPS1 into cis-trans-nepetalactone, which belongs to a family of metabolites that are both insect-repellent and have euphoric effect in cats. Binds NAD(+) as classical short-chain dehydrogenase/reductase (SDR), but does not utilize it for its redox-neutral cyclase activity. The polypeptide is (+)-cis,trans-nepetalactol synthase NEPS2 (Nepeta racemosa (Catmint)).